We begin with the raw amino-acid sequence, 422 residues long: Beta-1,3-galactosyltransferase 2 (422 aa).

At M1–R24 the chain is on the cytoplasmic side. The helical; Signal-anchor for type II membrane protein transmembrane segment at T25–H45 threads the bilayer. The Lumenal segment spans residues H46–H422. N75, N100, N119, N176, and N226 each carry an N-linked (GlcNAc...) asparagine glycan. The tract at residues T90 to T110 is disordered.

It belongs to the glycosyltransferase 31 family. The cofactor is Mn(2+).

The protein localises to the golgi apparatus membrane. It catalyses the reaction an N-acetyl-beta-D-glucosaminyl derivative + UDP-alpha-D-galactose = a beta-D-galactosyl-(1-&gt;3)-N-acetyl-beta-D-glucosaminyl derivative + UDP + H(+). The catalysed reaction is a beta-D-GlcNAc-(1-&gt;3)-beta-D-Gal-(1-&gt;4)-beta-D-Glc-(1&lt;-&gt;1)-Cer(d18:1(4E)) + UDP-alpha-D-galactose = a beta-D-Gal-(1-&gt;3)-beta-D-GlcNAc-(1-&gt;3)-beta-D-Gal-(1-&gt;4)-beta-D-Glc-(1&lt;-&gt;1')-Cer(d18:1(4E)) + UDP + H(+). It carries out the reaction a neolactoside IV(3)-beta-GlcNAc-nLc4Cer(d18:1(4E)) + UDP-alpha-D-galactose = a neolactoside IV(3)-beta-[Gal-beta-(1-&gt;3)-GlcNAc]-nLc4Cer(d18:1(4E)) + UDP + H(+). It functions in the pathway protein modification; protein glycosylation. In terms of biological role, beta-1,3-galactosyltransferase that transfers galactose from UDP-galactose to substrates with a terminal beta-N-acetylglucosamine (beta-GlcNAc) residue. Can also utilize substrates with a terminal galactose residue, albeit with lower efficiency. Involved in the biosynthesis of the carbohydrate moieties of glycolipids and glycoproteins. Inactive towards substrates with terminal alpha-N-acetylglucosamine (alpha-GlcNAc) or alpha-N-acetylgalactosamine (alpha-GalNAc) residues. The sequence is that of Beta-1,3-galactosyltransferase 2 (B3GALT2) from Pongo abelii (Sumatran orangutan).